A 78-amino-acid chain; its full sequence is Beta-defensin 29 (78 aa).

Positions 1 to 23 are cleaved as a signal peptide; the sequence is MPVTKSYFMTVVVVLILVDETTG. Intrachain disulfides connect Cys-40–Cys-67, Cys-47–Cys-61, and Cys-51–Cys-68.

It belongs to the beta-defensin family. Highly expressed in the cauda epididymis.

The protein resides in the secreted. In terms of biological role, has antibacterial activity. This is Beta-defensin 29 (Defb29) from Mus musculus (Mouse).